Here is a 736-residue protein sequence, read N- to C-terminus: MGMTVVIILVFSFFVAIVTAETSPYIIHMDLSAKPLPFSDHRSWFSTTLTSVITNRKPKIIYAYTDSVHGFSAVLTNSELQRLKHKPGYVSFTKDLPVKLHTTFSPKFIGLNSTSGTWPVSNYGAGIVIGIIDTGIWPDSPSFHDDGVGSVPSKWKGACEFNSSSLCNKKLIGAKVFNKGLFANNPDLRETKIGQYSSPYDTIGHGTHVAAIAAGNHVKNASYFSYAQGTASGIAPHAHLAIYKAAWEEGIYSSDVIAAIDQAIRDGVHVISLSLGLSFEDDDDNDGFGLENDPIAVASFAAIQKGVFVVTSGGNDGPYYWSLINGAPWIMTVGAGTIGRQFQGTLTFGNRVSFSFPSLFPGEFPSVQFPVTYIESGSVENKTLANRIVVCNENINIGSKLHQIRSTGAAAVVLITDKLLEEQDTIKFQFPVAFIGSKHRETIESYASSNKNNATAKLEFRKTVIGTKPAPEVGTYSSRGPFTSFPQILKPDILAPGTLILSAWPSVEQITGTRALPLFSGFNLLTGTSMAAPHVAGVAALIKQVHPNWSPSAIKSAIMTTALTLDNPLAVGAGHVSTNKVLNPGLIYDTTPQDFINFLCHEAKQSRKLINIITRSNISDACKKPSPYLNYPSIIAYFTSDQSSPKIFKRTLTNVGEAKRSYIVRVRGLKGLNVVVEPKKLMFSEKNEKLSYTVRLESPRGLQENVVYGLVSWVDEDEAEFEVSCSVVATSLVQES.

The N-terminal stretch at 1-20 is a signal peptide; it reads MGMTVVIILVFSFFVAIVTA. The propeptide at 21-101 is activation peptide; sequence ETSPYIIHMD…FTKDLPVKLH (81 aa). The Inhibitor I9 domain maps to 25–101; sequence YIIHMDLSAK…FTKDLPVKLH (77 aa). The region spanning 103–582 is the Peptidase S8 domain; the sequence is TFSPKFIGLN…AGHVSTNKVL (480 aa). N-linked (GlcNAc...) asparagine glycosylation occurs at Asn-112. The active-site Charge relay system is the Asp-133. The N-linked (GlcNAc...) asparagine glycan is linked to Asn-162. The active-site Charge relay system is His-205. Asn-220, Asn-381, and Asn-453 each carry an N-linked (GlcNAc...) asparagine glycan. Residues 367–441 form the PA domain; sequence VQFPVTYIES…VAFIGSKHRE (75 aa). Ser-529 (charge relay system) is an active-site residue. An N-linked (GlcNAc...) asparagine glycan is attached at Asn-617.

Belongs to the peptidase S8 family.

It localises to the secreted. The chain is Subtilisin-like protease SBT1.9 from Arabidopsis thaliana (Mouse-ear cress).